The chain runs to 192 residues: UPF0301 protein Bmul_2524/BMULJ_00714 (192 aa).

Belongs to the UPF0301 (AlgH) family.

The chain is UPF0301 protein Bmul_2524/BMULJ_00714 from Burkholderia multivorans (strain ATCC 17616 / 249).